The chain runs to 858 residues: Transcription factor pytR (858 aa).

The tract at residues 1 to 35 is disordered; the sequence is MAHFSRVASDPSLAPQPSAPSGLDSSTTSSSSTGL. A DNA-binding region (zn(2)-C6 fungal-type) is located at residues 39 to 65; sequence CTFCRARKIRCSSGPICSACRERNINC. The disordered stretch occupies residues 72–99; the sequence is RKGRPRRRGTNTSNAQAKKGDQENPTLG.

The protein localises to the nucleus. In terms of biological role, transcription factor that regulates the expression of the gene cluster that mediates the biosynthesis of Pyranterreones, a family of antioxidative compounds. The chain is Transcription factor pytR from Aspergillus terreus (strain NIH 2624 / FGSC A1156).